Consider the following 588-residue polypeptide: Probable G-protein coupled receptor 162 (588 aa).

Over 1 to 17 (MARGGAGAEEASLRSNA) the chain is Extracellular. A helical transmembrane segment spans residues 18–38 (LSWLACGLLALLANAWIILSI). The Cytoplasmic segment spans residues 39-49 (SAKQQKHKPLE). The chain crosses the membrane as a helical span at residues 50–70 (LLLCFLAGTHILMAAVPLTTF). At 71–91 (AVVQLRRQASSDYDWNESICK) the chain is on the extracellular side. Asparagine 86 carries N-linked (GlcNAc...) asparagine glycosylation. Residues 92-112 (VFVSTYYTLALATCFTVASLS) form a helical membrane-spanning segment. Topologically, residues 113 to 133 (YHRMWMVRWPVNYRLSNAKKQ) are cytoplasmic. A helical membrane pass occupies residues 134-154 (ALHAVMGIWMVSFILSTLPSI). Over 155–174 (GWHNNGERYYARGCQFIVSK) the chain is Extracellular. The chain crosses the membrane as a helical span at residues 175–195 (IGLGFGVCFSLLLLGGIVMGL). Residues 196 to 275 (VCVAITFYQT…SLQVTNLVSA (80 aa)) are Cytoplasmic-facing. The chain crosses the membrane as a helical span at residues 276–296 (IVFLYDSLTGVPILVVSFFSL). At 297–303 (KSDSAPP) the chain is on the extracellular side. Residues 304–324 (WMVLAVLWCSMAQTLLLPSFI) form a helical membrane-spanning segment. Residues 325–588 (WSCERYRADV…GNPIFPQLTL (264 aa)) are Cytoplasmic-facing. A phosphoserine mark is found at serine 413 and serine 435. Disordered stretches follow at residues 445–474 (QSRA…AEGG) and 511–550 (ETPL…AVGL). Residues 530 to 546 (PLGLSPRRLSLGSPESR) show a composition bias toward low complexity.

Belongs to the G-protein coupled receptor 1 family.

It localises to the cell membrane. Functionally, orphan receptor. The protein is Probable G-protein coupled receptor 162 (GPR162) of Homo sapiens (Human).